A 1187-amino-acid polypeptide reads, in one-letter code: Nicotinate dehydrogenase subunit B (1187 aa).

Residues 764-784 (WWFGSLAGVFGAALGMLATAL) form a helical membrane-spanning segment. Cytochrome c domains lie at 804–907 (AMLE…MSQT), 949–1057 (AQWN…SSLE), and 1075–1163 (VSLS…RHRF). 9 residues coordinate heme c: C818, C821, H822, C964, C967, H968, C1088, C1091, and H1092.

Requires Mo-molybdopterin cytosine dinucleotide as cofactor.

The protein localises to the membrane. It carries out the reaction 2 Fe(III)-[cytochrome] + nicotinate + H2O = 2 Fe(II)-[cytochrome] + 6-hydroxynicotinate + 2 H(+). Its pathway is cofactor degradation; nicotinate degradation. In terms of biological role, subunit of the two-component enzyme NicAB that mediates nicotinate hydroxylation, the first step in the aerobic nicotinate degradation pathway. Mediates conversion of nicotinate into 6-hydroxynicotinate (6HNA). The chain is Nicotinate dehydrogenase subunit B (nicB) from Pseudomonas putida (strain ATCC 47054 / DSM 6125 / CFBP 8728 / NCIMB 11950 / KT2440).